The following is a 218-amino-acid chain: 23 kDa integral membrane protein (218 aa).

Over 1–12 (MATLGTGMRCLK) the chain is Cytoplasmic. A helical transmembrane segment spans residues 13 to 36 (SCVFILNIICLLCSLVLIGAGAYV). Residues 37-55 (EVKFSQYEANLHKVWQAAP) lie on the Extracellular side of the membrane. Residues 56-71 (IAIIVVGVVILIVSFL) traverse the membrane as a helical segment. The Cytoplasmic portion of the chain corresponds to 72–82 (GCCGAIKENVC). A helical membrane pass occupies residues 83–108 (MLYMYAFFLIVLLIAELVAAIVAVVY). Residues 109–183 (KDKIDDEINT…SVFSAFLKRN (75 aa)) are Extracellular-facing. A helical membrane pass occupies residues 184-205 (LIIVACVAFGVCFFQLLSIVIA). Residues 206–218 (CCLGQRIHDYQNV) are Cytoplasmic-facing.

The protein belongs to the tetraspanin (TM4SF) family.

It is found in the membrane. This Schistosoma japonicum (Blood fluke) protein is 23 kDa integral membrane protein.